The primary structure comprises 284 residues: 1D-myo-inositol 2-acetamido-2-deoxy-alpha-D-glucopyranoside deacetylase (284 aa).

His12, Asp15, and His146 together coordinate Zn(2+).

Belongs to the MshB deacetylase family. Requires Zn(2+) as cofactor.

It catalyses the reaction 1D-myo-inositol 2-acetamido-2-deoxy-alpha-D-glucopyranoside + H2O = 1D-myo-inositol 2-amino-2-deoxy-alpha-D-glucopyranoside + acetate. Catalyzes the deacetylation of 1D-myo-inositol 2-acetamido-2-deoxy-alpha-D-glucopyranoside (GlcNAc-Ins) in the mycothiol biosynthesis pathway. This is 1D-myo-inositol 2-acetamido-2-deoxy-alpha-D-glucopyranoside deacetylase from Mycolicibacterium vanbaalenii (strain DSM 7251 / JCM 13017 / BCRC 16820 / KCTC 9966 / NRRL B-24157 / PYR-1) (Mycobacterium vanbaalenii).